Consider the following 371-residue polypeptide: Beta sliding clamp (371 aa).

It belongs to the beta sliding clamp family. Forms a ring-shaped head-to-tail homodimer around DNA which binds and tethers DNA polymerases and other proteins to the DNA. The DNA replisome complex has a single clamp-loading complex (3 tau and 1 each of delta, delta', psi and chi subunits) which binds 3 Pol III cores (1 core on the leading strand and 2 on the lagging strand) each with a beta sliding clamp dimer. Additional proteins in the replisome are other copies of gamma, psi and chi, Ssb, DNA helicase and RNA primase.

It localises to the cytoplasm. Functionally, confers DNA tethering and processivity to DNA polymerases and other proteins. Acts as a clamp, forming a ring around DNA (a reaction catalyzed by the clamp-loading complex) which diffuses in an ATP-independent manner freely and bidirectionally along dsDNA. Initially characterized for its ability to contact the catalytic subunit of DNA polymerase III (Pol III), a complex, multichain enzyme responsible for most of the replicative synthesis in bacteria; Pol III exhibits 3'-5' exonuclease proofreading activity. The beta chain is required for initiation of replication as well as for processivity of DNA replication. The chain is Beta sliding clamp (dnaN) from Treponema pallidum (strain Nichols).